A 440-amino-acid polypeptide reads, in one-letter code: Thymidine phosphorylase (440 aa).

It belongs to the thymidine/pyrimidine-nucleoside phosphorylase family. As to quaternary structure, homodimer.

The enzyme catalyses thymidine + phosphate = 2-deoxy-alpha-D-ribose 1-phosphate + thymine. It participates in pyrimidine metabolism; dTMP biosynthesis via salvage pathway; dTMP from thymine: step 1/2. Functionally, the enzymes which catalyze the reversible phosphorolysis of pyrimidine nucleosides are involved in the degradation of these compounds and in their utilization as carbon and energy sources, or in the rescue of pyrimidine bases for nucleotide synthesis. This Escherichia coli O127:H6 (strain E2348/69 / EPEC) protein is Thymidine phosphorylase.